The primary structure comprises 238 residues: Peptidyl-tRNA hydrolase (238 aa).

Tyrosine 14 serves as a coordination point for tRNA. Histidine 19 acts as the Proton acceptor in catalysis. Tyrosine 64, asparagine 66, and asparagine 112 together coordinate tRNA. The tract at residues 202–225 is disordered; sequence PAAQSHIHQARNSAQPKKLPETGP. Positions 207–216 are enriched in polar residues; sequence HIHQARNSAQ.

It belongs to the PTH family. As to quaternary structure, monomer.

Its subcellular location is the cytoplasm. It catalyses the reaction an N-acyl-L-alpha-aminoacyl-tRNA + H2O = an N-acyl-L-amino acid + a tRNA + H(+). Hydrolyzes ribosome-free peptidyl-tRNAs (with 1 or more amino acids incorporated), which drop off the ribosome during protein synthesis, or as a result of ribosome stalling. Functionally, catalyzes the release of premature peptidyl moieties from peptidyl-tRNA molecules trapped in stalled 50S ribosomal subunits, and thus maintains levels of free tRNAs and 50S ribosomes. This is Peptidyl-tRNA hydrolase from Agrobacterium fabrum (strain C58 / ATCC 33970) (Agrobacterium tumefaciens (strain C58)).